The primary structure comprises 2304 residues: Protein Ycf2 (2304 aa).

1637–1644 (GSIGTGRS) is a binding site for ATP.

This sequence belongs to the Ycf2 family.

The protein resides in the plastid. It localises to the chloroplast stroma. Functionally, probable ATPase of unknown function. Its presence in a non-photosynthetic plant (Epifagus virginiana) and experiments in tobacco indicate that it has an essential function which is probably not related to photosynthesis. The sequence is that of Protein Ycf2 from Amborella trichopoda.